A 260-amino-acid polypeptide reads, in one-letter code: HTH-type transcriptional repressor NanR (260 aa).

One can recognise an HTH gntR-type domain in the interval 27-95 (KKLSDMVEEE…NGERARVSMP (69 aa)). The H-T-H motif DNA-binding region spans 55-74 (ERELMEFFNVGRPSVREALA).

Belongs to the NanR family.

Its function is as follows. Transcriptional repressor that controls expression of the genes required for the catabolism of sialic acids. The chain is HTH-type transcriptional repressor NanR from Enterobacter sp. (strain 638).